The sequence spans 274 residues: SWI/SNF chromatin-remodeling complex subunit snf30 (274 aa).

Composition is skewed to polar residues over residues T123–Q150 and P157–S167. The tract at residues T123 to S167 is disordered.

Component of the SWI/SNF global transcription activator complex composed of at least arp9, arp42, snf5, snf22, snf30, sbf59, sol1, ssr1, ssr2, ssr3, ssr4 and tfg3.

It is found in the cytoplasm. Its subcellular location is the nucleus. Component of the SWI/SNF complex, an ATP-dependent chromatin remodeling complex, required for the positive and negative regulation of gene expression of a large number of genes. It changes chromatin structure by altering DNA-histone contacts within a nucleosome, leading eventually to a change in nucleosome position, thus facilitating or repressing binding of gene-specific transcription factors. The polypeptide is SWI/SNF chromatin-remodeling complex subunit snf30 (snf30) (Schizosaccharomyces pombe (strain 972 / ATCC 24843) (Fission yeast)).